Reading from the N-terminus, the 107-residue chain is Sperm-specific class P protein 32 (107 aa).

The segment at 1–20 (MLTIEPPSATFPASGGSSTH) is disordered. The region spanning 1 to 107 (MLTIEPPSAT…GDVTILLKTN (107 aa)) is the MSP domain.

In terms of tissue distribution, expressed at higher level in testis.

The protein is Sperm-specific class P protein 32 (ssp-32) of Caenorhabditis elegans.